Here is a 677-residue protein sequence, read N- to C-terminus: MLSSTDFTFASWELVVRVDHPNEEQQKDVTLRVSGDLHVGGVMLKLVEQINISQDWSDFALWWEQKHCWLLKTHWTLDKYGVQADAKLLFTPQHKMLRLRLPNLKMVRLRVSFSAVVFKAVSDICKILNIRRSEELSLLKPSGDYFKKKKKKDKNNKEPIIEDILNLESSPTASGSSVSPGLYSKTMTPIYDPINGTPASSTMTWFSDSPLTEQNCSILAFSQPPQSPEALADMYQPRSLVDKAKLNAGWLDSSRSLMEQGIQEDEQLLLRFKYYSFFDLNPKYDAVRINQLYEQARWAILLEEIDCTEEEMLIFAALQYHISKLSLSAETQDFAGESEVDEIEAALSNLEVTLEGGKADSLLEDITDIPKLADNLKLFRPKKLLPKAFKQYWFIFKDTSIAYFKNKELEQGEPLEKLNLRGCEVVPDVNVAGRKFGIKLLIPVADGMNEMYLRCDHENQYAQWMAACMLASKGKTMADSSYQPEVLNILSFLRMKNRNSASQVASSLENMDMNPECFVSPRCAKRHKSKQLAARILEAHQNVAQMPLVEAKLRFIQAWQSLPEFGLTYYLVRFKGSKKDDILGVSYNRLIKIDAATGIPVTTWRFTNIKQWNVNWETRQVVIEFDQNVFTAFTCLSADCKIVHEYIGGYIFLSTRSKDQNETLDEDLFHKLTGGQD.

In terms of domain architecture, FERM spans 96–653; the sequence is MLRLRLPNLK…HEYIGGYIFL (558 aa). 3 positions are modified to phosphoserine: Ser-170, Ser-179, and Ser-361. Residues 377–473 form the PH domain; the sequence is KLFRPKKLLP…WMAACMLASK (97 aa).

It belongs to the kindlin family. As to quaternary structure, interacts with the cytoplasmic domain of integrins ITGB1 and ITGB3. Expressed in brain, skeletal muscle, kidney, colon, adrenal gland, prostate, and placenta. Weakly or not expressed in heart, thymus, spleen, liver, small intestine, bone marrow, lung and peripheral blood leukocytes. Overexpressed in some colon and lung tumors. In skin, it is localized within the epidermis and particularly in basal keratocytes. Not detected in epidermal melanocytes and dermal fibroblasts.

The protein resides in the cytoplasm. It localises to the cytoskeleton. Its subcellular location is the cell junction. The protein localises to the focal adhesion. It is found in the cell projection. The protein resides in the ruffle membrane. Functionally, involved in cell adhesion. Contributes to integrin activation. When coexpressed with talin, potentiates activation of ITGA2B. Required for normal keratinocyte proliferation. Required for normal polarization of basal keratinocytes in skin, and for normal cell shape. Required for normal adhesion of keratinocytes to fibronectin and laminin, and for normal keratinocyte migration to wound sites. May mediate TGF-beta 1 signaling in tumor progression. The chain is Fermitin family homolog 1 (FERMT1) from Homo sapiens (Human).